The chain runs to 176 residues: N5-carboxyaminoimidazole ribonucleotide mutase (176 aa).

Residues serine 14, aspartate 17, and arginine 44 each contribute to the substrate site.

Belongs to the AIR carboxylase family. Class I subfamily.

The catalysed reaction is 5-carboxyamino-1-(5-phospho-D-ribosyl)imidazole + H(+) = 5-amino-1-(5-phospho-D-ribosyl)imidazole-4-carboxylate. It functions in the pathway purine metabolism; IMP biosynthesis via de novo pathway; 5-amino-1-(5-phospho-D-ribosyl)imidazole-4-carboxylate from 5-amino-1-(5-phospho-D-ribosyl)imidazole (N5-CAIR route): step 2/2. Functionally, catalyzes the conversion of N5-carboxyaminoimidazole ribonucleotide (N5-CAIR) to 4-carboxy-5-aminoimidazole ribonucleotide (CAIR). The sequence is that of N5-carboxyaminoimidazole ribonucleotide mutase from Synechocystis sp. (strain ATCC 27184 / PCC 6803 / Kazusa).